Reading from the N-terminus, the 346-residue chain is (R,R)-butanediol dehydrogenase (346 aa).

Zn(2+) contacts are provided by cysteine 37, histidine 70, and glutamate 152.

The protein belongs to the zinc-containing alcohol dehydrogenase family. Homotetramer. Interacts with BrxC. Requires Zn(2+) as cofactor.

The protein resides in the cytoplasm. It localises to the secreted. It carries out the reaction (R,R)-butane-2,3-diol + NAD(+) = (R)-acetoin + NADH + H(+). This is (R,R)-butanediol dehydrogenase from Bacillus subtilis (strain 168).